A 160-amino-acid polypeptide reads, in one-letter code: Cytochrome b6-f complex subunit 4 (160 aa).

4 helical membrane-spanning segments follow: residues 36–56 (LLYI…GLAV), 68–88 (PFAT…FQIL), 95–115 (FFGV…PFLE), and 131–151 (SVFL…VLPI).

This sequence belongs to the cytochrome b family. PetD subfamily. As to quaternary structure, the 4 large subunits of the cytochrome b6-f complex are cytochrome b6, subunit IV (17 kDa polypeptide, petD), cytochrome f and the Rieske protein, while the 4 small subunits are petG, petL, petM and petN. The complex functions as a dimer.

The protein localises to the plastid. It localises to the chloroplast thylakoid membrane. Component of the cytochrome b6-f complex, which mediates electron transfer between photosystem II (PSII) and photosystem I (PSI), cyclic electron flow around PSI, and state transitions. In Welwitschia mirabilis (Tree tumbo), this protein is Cytochrome b6-f complex subunit 4.